The chain runs to 32 residues: Protein YthB (32 aa).

The sequence is that of Protein YthB from Escherichia coli (strain K12).